The primary structure comprises 478 residues: Glycogen synthase (478 aa).

Position 20 (lysine 20) interacts with ADP-alpha-D-glucose.

Belongs to the glycosyltransferase 1 family. Bacterial/plant glycogen synthase subfamily.

It carries out the reaction [(1-&gt;4)-alpha-D-glucosyl](n) + ADP-alpha-D-glucose = [(1-&gt;4)-alpha-D-glucosyl](n+1) + ADP + H(+). The protein operates within glycan biosynthesis; glycogen biosynthesis. In terms of biological role, synthesizes alpha-1,4-glucan chains using ADP-glucose. The chain is Glycogen synthase from Cereibacter sphaeroides (strain ATCC 17023 / DSM 158 / JCM 6121 / CCUG 31486 / LMG 2827 / NBRC 12203 / NCIMB 8253 / ATH 2.4.1.) (Rhodobacter sphaeroides).